An 898-amino-acid polypeptide reads, in one-letter code: Protein SOV1, mitochondrial (898 aa).

Residues 1–31 (MFKYNRSLCSSALIAKSQIRFYRLKRAPLNY) constitute a mitochondrion transit peptide.

The protein resides in the mitochondrion. The polypeptide is Protein SOV1, mitochondrial (SOV1) (Saccharomyces cerevisiae (strain ATCC 204508 / S288c) (Baker's yeast)).